The following is a 454-amino-acid chain: MTTTVIILAAGKGTRMRSHLPKVLQPLAGRPLLGHVIQTAKQLNANNIITIFGHGGAQVQQQFQQENIQWVEQTEQLGTGHAVQMTLPVLPHDGLSLILYGDVPLVRQQTLEKLLAVSSTTGIGMITLRVEDPTGYGRIIRESDKIQAIVEHKDASEQQRQIQEINTGIYCVSNQKLHEWLPKLSNNNAQGEYYLTDIVAMAVADGLEIASIQPDLAFEVEGVNDRLQLAALEREFQLQQAKSLMQQGVTLTDPSRFDLRGTLKIGQDVRIDINVIIEGNCELGDFVEIGAGCVLKNTKIAAGTKVQPYSIFEDAVVGENTQIGPFARLRPGAHLAAEVHIGNFVEVKNTSIGVGSKANHFTYLGDAEVGAGSNIGAGTITCNYDGANKHKTVIGDAVFIGSNSSLVAPVSIGDGATVGAGSVITRNVPENTLAFERAQQIEKANYQRPQKLKK.

Positions 1-226 are pyrophosphorylase; the sequence is MTTTVIILAA…AFEVEGVNDR (226 aa). Residues 8–11, lysine 22, glutamine 73, 78–79, 100–102, glycine 137, glutamate 151, asparagine 166, and asparagine 224 each bind UDP-N-acetyl-alpha-D-glucosamine; these read LAAG, GT, and YGD. Residue aspartate 102 participates in Mg(2+) binding. Asparagine 224 serves as a coordination point for Mg(2+). The linker stretch occupies residues 227-247; it reads LQLAALEREFQLQQAKSLMQQ. Residues 248-454 are N-acetyltransferase; that stretch reads GVTLTDPSRF…NYQRPQKLKK (207 aa). Residues arginine 330 and lysine 348 each contribute to the UDP-N-acetyl-alpha-D-glucosamine site. Histidine 360 serves as the catalytic Proton acceptor. UDP-N-acetyl-alpha-D-glucosamine-binding residues include tyrosine 363 and asparagine 374. Acetyl-CoA contacts are provided by residues alanine 377, 383–384, serine 402, alanine 420, and arginine 437; that span reads NY.

This sequence in the N-terminal section; belongs to the N-acetylglucosamine-1-phosphate uridyltransferase family. The protein in the C-terminal section; belongs to the transferase hexapeptide repeat family. As to quaternary structure, homotrimer. Requires Mg(2+) as cofactor.

Its subcellular location is the cytoplasm. It carries out the reaction alpha-D-glucosamine 1-phosphate + acetyl-CoA = N-acetyl-alpha-D-glucosamine 1-phosphate + CoA + H(+). The catalysed reaction is N-acetyl-alpha-D-glucosamine 1-phosphate + UTP + H(+) = UDP-N-acetyl-alpha-D-glucosamine + diphosphate. It participates in nucleotide-sugar biosynthesis; UDP-N-acetyl-alpha-D-glucosamine biosynthesis; N-acetyl-alpha-D-glucosamine 1-phosphate from alpha-D-glucosamine 6-phosphate (route II): step 2/2. It functions in the pathway nucleotide-sugar biosynthesis; UDP-N-acetyl-alpha-D-glucosamine biosynthesis; UDP-N-acetyl-alpha-D-glucosamine from N-acetyl-alpha-D-glucosamine 1-phosphate: step 1/1. The protein operates within bacterial outer membrane biogenesis; LPS lipid A biosynthesis. Its function is as follows. Catalyzes the last two sequential reactions in the de novo biosynthetic pathway for UDP-N-acetylglucosamine (UDP-GlcNAc). The C-terminal domain catalyzes the transfer of acetyl group from acetyl coenzyme A to glucosamine-1-phosphate (GlcN-1-P) to produce N-acetylglucosamine-1-phosphate (GlcNAc-1-P), which is converted into UDP-GlcNAc by the transfer of uridine 5-monophosphate (from uridine 5-triphosphate), a reaction catalyzed by the N-terminal domain. This is Bifunctional protein GlmU from Acinetobacter baylyi (strain ATCC 33305 / BD413 / ADP1).